We begin with the raw amino-acid sequence, 132 residues long: Small ribosomal subunit protein uS8 (132 aa).

It belongs to the universal ribosomal protein uS8 family. Part of the 30S ribosomal subunit. Contacts proteins S5 and S12.

One of the primary rRNA binding proteins, it binds directly to 16S rRNA central domain where it helps coordinate assembly of the platform of the 30S subunit. This chain is Small ribosomal subunit protein uS8, found in Sinorhizobium fredii (strain NBRC 101917 / NGR234).